We begin with the raw amino-acid sequence, 144 residues long: Putative protein PHLOEM PROTEIN 2-LIKE B4 (144 aa).

In Arabidopsis thaliana (Mouse-ear cress), this protein is Putative protein PHLOEM PROTEIN 2-LIKE B4 (PP2B4).